The following is a 154-amino-acid chain: Aspartate carbamoyltransferase regulatory chain (154 aa).

Zn(2+)-binding residues include Cys-111, Cys-116, Cys-139, and Cys-142.

Belongs to the PyrI family. Contains catalytic and regulatory chains. The cofactor is Zn(2+).

Functionally, involved in allosteric regulation of aspartate carbamoyltransferase. The protein is Aspartate carbamoyltransferase regulatory chain of Parabacteroides distasonis (strain ATCC 8503 / DSM 20701 / CIP 104284 / JCM 5825 / NCTC 11152).